We begin with the raw amino-acid sequence, 1322 residues long: Ice nucleation protein InaA (1322 aa).

The tract at residues 162-1281 (ATYGSTLSGT…LTAGENSVLI (1120 aa)) is octapeptide periodicity. 4 stretches are compositionally biased toward polar residues: residues 271–302 (SLTA…QKGS), 327–350 (TQTA…QKGS), 373–398 (GSTQ…QKGS), and 423–446 (TQTA…QKGS). Disordered stretches follow at residues 271–303 (SLTA…KGSD), 327–358 (TQTA…GYGS), 372–399 (YGST…KGSD), and 423–448 (TQTA…GSDL).

Belongs to the bacterial ice nucleation protein family.

The protein resides in the cell outer membrane. Functionally, ice nucleation proteins enable bacteria to nucleate crystallization in supercooled water. The sequence is that of Ice nucleation protein InaA (inaA) from Pantoea ananas (Erwinia uredovora).